Here is a 534-residue protein sequence, read N- to C-terminus: Zinc finger protein 671 (534 aa).

The KRAB domain maps to 49–120 (VVFEDVFVYF…DQVDMTSATE (72 aa)). The segment at 192 to 214 (YLCGACGKQFWFSTDFDQHQNQP) adopts a C2H2-type 1; degenerate zinc-finger fold. C2H2-type zinc fingers lie at residues 285 to 307 (HRCG…QRIH), 313 to 335 (YECN…QTVH), 341 to 363 (YECS…RRVH), 369 to 391 (YQCG…QEVH), 397 to 419 (YVCS…QRTH), 425 to 447 (YECS…WRIH), 451 to 473 (YECS…QKVH), 479 to 501 (YECS…WKVH), and 507 to 529 (YVCS…QRVH).

This sequence belongs to the krueppel C2H2-type zinc-finger protein family.

It localises to the nucleus. Its function is as follows. May be involved in transcriptional regulation. The sequence is that of Zinc finger protein 671 (ZNF671) from Homo sapiens (Human).